The following is a 252-amino-acid chain: 3-dehydroquinate dehydratase (252 aa).

Residues 46-48 and Arg82 contribute to the 3-dehydroquinate site; that span reads EWR. Residue His143 is the Proton donor/acceptor of the active site. The Schiff-base intermediate with substrate role is filled by Lys170. Positions 212, 231, and 235 each coordinate 3-dehydroquinate.

It belongs to the type-I 3-dehydroquinase family. In terms of assembly, homodimer.

It catalyses the reaction 3-dehydroquinate = 3-dehydroshikimate + H2O. The protein operates within metabolic intermediate biosynthesis; chorismate biosynthesis; chorismate from D-erythrose 4-phosphate and phosphoenolpyruvate: step 3/7. In terms of biological role, involved in the third step of the chorismate pathway, which leads to the biosynthesis of aromatic amino acids. Catalyzes the cis-dehydration of 3-dehydroquinate (DHQ) and introduces the first double bond of the aromatic ring to yield 3-dehydroshikimate. The protein is 3-dehydroquinate dehydratase of Listeria monocytogenes serovar 1/2a (strain ATCC BAA-679 / EGD-e).